Consider the following 494-residue polypeptide: Probable cytosol aminopeptidase (494 aa).

Mn(2+) is bound by residues lysine 260 and aspartate 265. Lysine 272 is a catalytic residue. 3 residues coordinate Mn(2+): aspartate 283, aspartate 342, and glutamate 344. The active site involves arginine 346.

Belongs to the peptidase M17 family. Requires Mn(2+) as cofactor.

It is found in the cytoplasm. The enzyme catalyses Release of an N-terminal amino acid, Xaa-|-Yaa-, in which Xaa is preferably Leu, but may be other amino acids including Pro although not Arg or Lys, and Yaa may be Pro. Amino acid amides and methyl esters are also readily hydrolyzed, but rates on arylamides are exceedingly low.. The catalysed reaction is Release of an N-terminal amino acid, preferentially leucine, but not glutamic or aspartic acids.. Its function is as follows. Presumably involved in the processing and regular turnover of intracellular proteins. Catalyzes the removal of unsubstituted N-terminal amino acids from various peptides. The chain is Probable cytosol aminopeptidase from Bacillus thuringiensis subsp. konkukian (strain 97-27).